Reading from the N-terminus, the 234-residue chain is MAHVAKKYKAAAEKVDRAKRYKLDEAMSLVKQTATKKFDETVDASINLGVDPKHADQVVRGAVVLPHGMGKTVRLAVFAKGDKAKEAQEAGADIVGAEDLAEKIQGGFMDFDKLIATPDMMGVVGRLGKILGPRGLMPNPKVGTVTMDLARAVKEQKAGKVEFRVEKAGIVHVPFGKASFDPEKLKANFSAIMEVIYKAKPQTAKGVYVKNVTLSTTMGPGIKLDLAELAAQHA.

Belongs to the universal ribosomal protein uL1 family. In terms of assembly, part of the 50S ribosomal subunit.

Its function is as follows. Binds directly to 23S rRNA. The L1 stalk is quite mobile in the ribosome, and is involved in E site tRNA release. In terms of biological role, protein L1 is also a translational repressor protein, it controls the translation of the L11 operon by binding to its mRNA. The chain is Large ribosomal subunit protein uL1 from Anaeromyxobacter dehalogenans (strain 2CP-C).